Reading from the N-terminus, the 375-residue chain is Thioredoxin reductase 1, mitochondrial (375 aa).

The transit peptide at 1 to 37 (MNCVSRLKCLISKARSFARLGGESTLSQPPSLASAAF) directs the protein to the mitochondrion. Residues 58–61 (SGPA), 79–80 (FE), 87–92 (IAPGGQ), N101, V134, C192, D337, and 344–346 (RQA) contribute to the FAD site. Residues C189 and C192 are joined by a disulfide bond.

It belongs to the class-II pyridine nucleotide-disulfide oxidoreductase family. In terms of assembly, homodimer. FAD is required as a cofactor. As to expression, ubiquitous.

The protein localises to the cytoplasm. The protein resides in the mitochondrion. The catalysed reaction is [thioredoxin]-dithiol + NADP(+) = [thioredoxin]-disulfide + NADPH + H(+). Its function is as follows. NADPH-dependent thioredoxin-disulfide reductase that reduces thioredoxins O1, O2 and F3. This Arabidopsis thaliana (Mouse-ear cress) protein is Thioredoxin reductase 1, mitochondrial (NTR1).